Consider the following 168-residue polypeptide: Sperm acrosome-associated protein 9 (168 aa).

Microtubule inner protein component of sperm flagellar doublet microtubules. Interacts with CABP1 and CALR. Interacts with INCA1. Interacts with microtubules. Expressed in sperm (at protein level). Expressed from almost all the cell types of testis, with abundant expression in round and elongated spermatids (at protein level). Predominantly expressed in tissues containing motile cilia.

The protein localises to the cytoplasm. Its subcellular location is the cytoplasmic vesicle. It is found in the secretory vesicle. The protein resides in the acrosome. It localises to the cytoskeleton. The protein localises to the cilium basal body. Its subcellular location is the flagellum axoneme. It is found in the cilium axoneme. The protein resides in the nucleus. Functionally, microtubule inner protein (MIP) part of the dynein-decorated doublet microtubules (DMTs) of multiciliated respiratory cells and the distal singlet microtubules of monoflagellated spermatozoa. Forms an extensive interaction network cross-linking the lumen of axonemal doublet microtubules. The sequence is that of Sperm acrosome-associated protein 9 from Mus musculus (Mouse).